The primary structure comprises 763 residues: G protein-regulated inducer of neurite outgrowth 3 (763 aa).

Disordered regions lie at residues 1–48 (MGTV…IGNV), 65–111 (QACV…APGL), and 192–268 (ENSQ…GATC). The span at 27 to 44 (ESQSVSPQPAQPDNNASG) shows a compositional bias: polar residues. Positions 93–104 (KTPDDFLLHGSK) are enriched in basic and acidic residues. A compositionally biased stretch (polar residues) spans 237 to 250 (ENKQPSATALNTTA). A phosphoserine mark is found at Ser323 and Ser359. 3 disordered regions span residues 420-452 (TSSQ…PDFQ), 471-624 (NQGL…PRRG), and 711-737 (VKTQ…GRQH). Over residues 437 to 450 (KEATSRQPEGTNPD) the composition is skewed to polar residues. 2 stretches are compositionally biased toward basic and acidic residues: residues 480-496 (REPE…KAES) and 518-539 (PTDK…KDHA). Positions 593–609 (SLSLPSDGTGDSSPGSG) are enriched in low complexity.

May be involved in neurite outgrowth. This is G protein-regulated inducer of neurite outgrowth 3 (Gprin3) from Mus musculus (Mouse).